The chain runs to 333 residues: UDP-3-O-acylglucosamine N-acyltransferase 2 (333 aa).

The active-site Proton acceptor is His-243.

This sequence belongs to the transferase hexapeptide repeat family. LpxD subfamily. Homotrimer.

The enzyme catalyses a UDP-3-O-[(3R)-3-hydroxyacyl]-alpha-D-glucosamine + a (3R)-hydroxyacyl-[ACP] = a UDP-2-N,3-O-bis[(3R)-3-hydroxyacyl]-alpha-D-glucosamine + holo-[ACP] + H(+). The protein operates within bacterial outer membrane biogenesis; LPS lipid A biosynthesis. Functionally, catalyzes the N-acylation of UDP-3-O-acylglucosamine using 3-hydroxyacyl-ACP as the acyl donor. Is involved in the biosynthesis of lipid A, a phosphorylated glycolipid that anchors the lipopolysaccharide to the outer membrane of the cell. In Koribacter versatilis (strain Ellin345), this protein is UDP-3-O-acylglucosamine N-acyltransferase 2.